The sequence spans 278 residues: Release factor glutamine methyltransferase (278 aa).

Residues glycine 116 to glycine 120, aspartate 139, tryptophan 168, and asparagine 182 each bind S-adenosyl-L-methionine. Residue asparagine 182–tyrosine 185 coordinates substrate.

This sequence belongs to the protein N5-glutamine methyltransferase family. PrmC subfamily.

The catalysed reaction is L-glutaminyl-[peptide chain release factor] + S-adenosyl-L-methionine = N(5)-methyl-L-glutaminyl-[peptide chain release factor] + S-adenosyl-L-homocysteine + H(+). Functionally, methylates the class 1 translation termination release factors RF1/PrfA and RF2/PrfB on the glutamine residue of the universally conserved GGQ motif. This is Release factor glutamine methyltransferase from Cereibacter sphaeroides (strain ATCC 17023 / DSM 158 / JCM 6121 / CCUG 31486 / LMG 2827 / NBRC 12203 / NCIMB 8253 / ATH 2.4.1.) (Rhodobacter sphaeroides).